The sequence spans 275 residues: Transmembrane protein 106B (275 aa).

The segment at 1–24 is disordered; it reads MGKSLSHLPLHSNKEDGYDGVTST. Gly-2 carries N-myristoyl glycine lipidation. Over 2 to 97 the chain is Cytoplasmic; the sequence is GKSLSHLPLH…QRLRPRRTKL (96 aa). Ser-34 carries the post-translational modification Phosphoserine. The chain crosses the membrane as a helical span at residues 98 to 118; sequence YVMASVFVCLLLSGLAVFFLF. Topologically, residues 119 to 275 are lumenal; sequence PRSIDVKYIG…EYLNVLQPQQ (157 aa). N-linked (GlcNAc...) asparagine glycosylation is found at Asn-146, Asn-152, Asn-165, and Asn-184. Cys-215 and Cys-254 form a disulfide bridge. Asn-257 carries N-linked (GlcNAc...) asparagine glycosylation.

This sequence belongs to the TMEM106 family. In terms of assembly, can form homomers. Interacts (via N-terminus) with MAP6 (via C-terminus). Interacts (via C-terminus) with the vacuolar-type ATPase subunit ATP6AP1. Interacts (via N-terminus) with AP2M1 and CLTC. Interacts with TMEM106C. As to expression, expressed in cortical neurons (at protein level).

Its subcellular location is the late endosome membrane. It is found in the lysosome membrane. It localises to the cell membrane. Its function is as follows. Involved in dendrite morphogenesis and maintenance by regulating lysosomal trafficking. May act as a molecular brake for retrograde transport of late endosomes/lysosomes, possibly via its interaction with MAP6. In neurons, may also play a role in the regulation of lysosomal size and responsiveness to stress. Required for proper lysosomal acidification. In terms of biological role, in neurons, involved in the transport of late endosomes/lysosomes. May be involved in dendrite morphogenesis and maintenance by regulating lysosomal trafficking. May act as a molecular brake for retrograde transport of late endosomes/lysosomes, possibly via its interaction with MAP6. In motoneurons, may mediate the axonal transport of lysosomes and axonal sorting at the initial segment. It remains unclear whether TMEM106B affects the transport of moving lysosomes in the anterograde or retrograde direction in neurites and whether it is particularly important in the sorting of lysosomes in axons or in dendrites. In neurons, may also play a role in the regulation of lysosomal size and responsiveness to stress. Required for proper lysosomal acidification. The sequence is that of Transmembrane protein 106B (Tmem106b) from Rattus norvegicus (Rat).